Here is a 217-residue protein sequence, read N- to C-terminus: Aminopyrimidine aminohydrolase (217 aa).

Asp-44 lines the substrate pocket. Residue Cys-135 is the Nucleophile of the active site. Tyr-139 and Tyr-165 together coordinate substrate. The active-site Proton donor is Glu-207.

The protein belongs to the TenA family. Homotetramer.

It catalyses the reaction 4-amino-5-aminomethyl-2-methylpyrimidine + H2O = 4-amino-5-hydroxymethyl-2-methylpyrimidine + NH4(+). It participates in cofactor biosynthesis; thiamine diphosphate biosynthesis. Functionally, catalyzes an amino-pyrimidine hydrolysis reaction at the C5' of the pyrimidine moiety of thiamine compounds to give a hydroxymethylpyrimidine (HMP). Displays low activity on 4-amino-5-aminomethyl-2-methylpyrimidine as substrate, indicating that the enzyme may act on a different HMP precursor that may derive from the human stomach food assumption or processing. Is probably involved in thiamine biosynthesis. Does not display thiaminase II activity, as it is unable to hydrolyze thiamine. The sequence is that of Aminopyrimidine aminohydrolase from Helicobacter pylori (Campylobacter pylori).